The sequence spans 510 residues: Catalase (510 aa).

A signal peptide spans 1–26 (MPLLNWSRHMVCLTAAGLITVPTVYA). Residues histidine 78 and asparagine 150 contribute to the active site. Position 358 (tyrosine 358) interacts with heme. Polar residues predominate over residues 386–400 (NQDGALNTGHTTSGV). Residues 386 to 412 (NQDGALNTGHTTSGVNYEPSRLEPRPA) are disordered.

It belongs to the catalase family. Requires heme as cofactor.

The protein resides in the periplasm. The enzyme catalyses 2 H2O2 = O2 + 2 H2O. Decomposes hydrogen peroxide into water and oxygen; serves to protect cells from the toxic effects of hydrogen peroxide. The chain is Catalase (katB) from Pseudomonas syringae pv. syringae.